The chain runs to 453 residues: Ribulose bisphosphate carboxylase large chain (453 aa).

Positions 1 to 2 (MS) are excised as a propeptide. The residue at position 3 (Pro-3) is an N-acetylproline. N6,N6,N6-trimethyllysine is present on Lys-14. Substrate contacts are provided by Asn-123 and Thr-173. The active-site Proton acceptor is Lys-175. Lys-177 provides a ligand contact to substrate. 3 residues coordinate Mg(2+): Lys-201, Asp-203, and Glu-204. Lys-201 is modified (N6-carboxylysine). The Proton acceptor role is filled by His-294. Substrate contacts are provided by Arg-295, His-327, and Ser-379.

Belongs to the RuBisCO large chain family. Type I subfamily. In terms of assembly, heterohexadecamer of 8 large chains and 8 small chains; disulfide-linked. The disulfide link is formed within the large subunit homodimers. Mg(2+) is required as a cofactor. The disulfide bond which can form in the large chain dimeric partners within the hexadecamer appears to be associated with oxidative stress and protein turnover.

The protein resides in the plastid. It localises to the chloroplast. It catalyses the reaction 2 (2R)-3-phosphoglycerate + 2 H(+) = D-ribulose 1,5-bisphosphate + CO2 + H2O. The catalysed reaction is D-ribulose 1,5-bisphosphate + O2 = 2-phosphoglycolate + (2R)-3-phosphoglycerate + 2 H(+). Functionally, ruBisCO catalyzes two reactions: the carboxylation of D-ribulose 1,5-bisphosphate, the primary event in carbon dioxide fixation, as well as the oxidative fragmentation of the pentose substrate in the photorespiration process. Both reactions occur simultaneously and in competition at the same active site. This Galium lucidum protein is Ribulose bisphosphate carboxylase large chain.